The sequence spans 1100 residues: DNA repair protein RAD1 (1100 aa).

The tract at residues 1 to 47 (MSQLFYQGDSDDELQEELTRQTTQASQSSKIKNEDEPDDSNHLNEVE) is disordered. The segment covering 20-30 (RQTTQASQSSK) has biased composition (polar residues). Residues 31 to 47 (IKNEDEPDDSNHLNEVE) show a composition bias toward basic and acidic residues. Serine 613 carries the post-translational modification Phosphoserine. Positions 821-901 (VVIVDTREFN…YPTLLIEFDE (81 aa)) constitute an ERCC4 domain. Residues 1063 to 1100 (EKEEQEQESTDENLESPGKTTDDNALHDHHNDVPEAPV) form a disordered region. Over residues 1065–1076 (EEQEQESTDENL) the composition is skewed to acidic residues. Serine 1071 carries the phosphoserine modification. Threonine 1072 bears the Phosphothreonine mark. The span at 1082–1100 (TTDDNALHDHHNDVPEAPV) shows a compositional bias: basic and acidic residues.

This sequence belongs to the XPF family. Component of the nucleotide excision repair factor 1 (NEF1) complex consisting of RAD1, RAD10 and RAD14. Interacts with SAW1.

The protein resides in the nucleus. Its function is as follows. Involved in nucleotide excision repair of DNA damaged with UV light, bulky adducts, or cross-linking agents. Along with RAD10 forms an endonuclease that specifically degrades single-stranded DNA. In Saccharomyces cerevisiae (strain ATCC 204508 / S288c) (Baker's yeast), this protein is DNA repair protein RAD1 (RAD1).